A 116-amino-acid chain; its full sequence is Protein Rev (116 aa).

Phosphoserine; by host CK2 is present on residues S5 and S8. The segment at 18 to 26 (IIKHLYQSN) is homomultimerization. Residues 20-48 (KHLYQSNPPPKPEGTRQARRNRRRRWRER) form a disordered region. Positions 34-50 (TRQARRNRRRRWRERQR) match the Nuclear localization signal and RNA-binding (RRE) motif. Residues 36 to 48 (QARRNRRRRWRER) show a composition bias toward basic residues. The Nuclear export signal and binding to XPO1 signature appears at 73–84 (LQLPPLERLTLD). The interval 91-116 (TSGTQGVGSPQILVESPAVLESGTKE) is disordered. A phosphoserine; by host mark is found at S92 and S99.

It belongs to the HIV-1 REV protein family. In terms of assembly, homomultimer; when bound to the RRE. Multimeric assembly is essential for activity and may involve XPO1. Binds to human KPNB1, XPO1, TNPO1, RANBP5 and IPO7. Interacts with the viral Integrase. Interacts with human KHDRBS1. Interacts with human NAP1; this interaction decreases Rev multimerization and stimulates its activity. Interacts with human DEAD-box helicases DDX3 and DDX24; these interactions may serve for viral RNA export to the cytoplasm and packaging, respectively. Interacts with human PSIP1; this interaction may inhibit HIV-1 DNA integration by promoting dissociation of the Integrase-LEDGF/p75 complex. Asymmetrically arginine dimethylated at one site by host PRMT6. Methylation impairs the RNA-binding activity and export of viral RNA from the nucleus to the cytoplasm. In terms of processing, phosphorylated by protein kinase CK2. Presence of, and maybe binding to the N-terminus of the regulatory beta subunit of CK2 is necessary for CK2-mediated Rev's phosphorylation.

Its subcellular location is the host nucleus. It localises to the host nucleolus. It is found in the host cytoplasm. In terms of biological role, escorts unspliced or incompletely spliced viral pre-mRNAs (late transcripts) out of the nucleus of infected cells. These pre-mRNAs carry a recognition sequence called Rev responsive element (RRE) located in the env gene, that is not present in fully spliced viral mRNAs (early transcripts). This function is essential since most viral proteins are translated from unspliced or partially spliced pre-mRNAs which cannot exit the nucleus by the pathway used by fully processed cellular mRNAs. Rev itself is translated from a fully spliced mRNA that readily exits the nucleus. Rev's nuclear localization signal (NLS) binds directly to KPNB1/Importin beta-1 without previous binding to KPNA1/Importin alpha-1. KPNB1 binds to the GDP bound form of RAN (Ran-GDP) and targets Rev to the nucleus. In the nucleus, the conversion from Ran-GDP to Ran-GTP dissociates Rev from KPNB1 and allows Rev's binding to the RRE in viral pre-mRNAs. Rev multimerization on the RRE via cooperative assembly exposes its nuclear export signal (NES) to the surface. Rev can then form a complex with XPO1/CRM1 and Ran-GTP, leading to nuclear export of the complex. Conversion from Ran-GTP to Ran-GDP mediates dissociation of the Rev/RRE/XPO1/RAN complex, so that Rev can return to the nucleus for a subsequent round of export. Beside KPNB1, also seems to interact with TNPO1/Transportin-1, RANBP5/IPO5 and IPO7/RANBP7 for nuclear import. The nucleoporin-like HRB/RIP is an essential cofactor that probably indirectly interacts with Rev to release HIV RNAs from the perinuclear region to the cytoplasm. The sequence is that of Protein Rev from Human immunodeficiency virus type 1 group M subtype B (isolate CDC-451) (HIV-1).